The following is a 158-amino-acid chain: 2-C-methyl-D-erythritol 2,4-cyclodiphosphate synthase (158 aa).

A divalent metal cation is bound by residues D9 and H11. Residues 9 to 11 (DVH) and 35 to 36 (HS) contribute to the 4-CDP-2-C-methyl-D-erythritol 2-phosphate site. H43 lines the a divalent metal cation pocket. 4-CDP-2-C-methyl-D-erythritol 2-phosphate contacts are provided by residues 57 to 59 (DIG), 62 to 66 (FPDTD), 133 to 136 (TTTE), F140, and R143.

The protein belongs to the IspF family. As to quaternary structure, homotrimer. A divalent metal cation is required as a cofactor.

The enzyme catalyses 4-CDP-2-C-methyl-D-erythritol 2-phosphate = 2-C-methyl-D-erythritol 2,4-cyclic diphosphate + CMP. Its pathway is isoprenoid biosynthesis; isopentenyl diphosphate biosynthesis via DXP pathway; isopentenyl diphosphate from 1-deoxy-D-xylulose 5-phosphate: step 4/6. In terms of biological role, involved in the biosynthesis of isopentenyl diphosphate (IPP) and dimethylallyl diphosphate (DMAPP), two major building blocks of isoprenoid compounds. Catalyzes the conversion of 4-diphosphocytidyl-2-C-methyl-D-erythritol 2-phosphate (CDP-ME2P) to 2-C-methyl-D-erythritol 2,4-cyclodiphosphate (ME-CPP) with a corresponding release of cytidine 5-monophosphate (CMP). This Haemophilus influenzae (strain 86-028NP) protein is 2-C-methyl-D-erythritol 2,4-cyclodiphosphate synthase.